A 275-amino-acid chain; its full sequence is NH(3)-dependent NAD(+) synthetase (275 aa).

46–53 (GISGGQDS) lines the ATP pocket. Asp52 is a binding site for Mg(2+). Arg140 contributes to the deamido-NAD(+) binding site. Thr160 is an ATP binding site. Glu165 contributes to the Mg(2+) binding site. Residues Lys173 and Asp180 each coordinate deamido-NAD(+). ATP-binding residues include Lys189 and Thr211. Deamido-NAD(+) is bound at residue 260–261 (HK).

This sequence belongs to the NAD synthetase family. In terms of assembly, homodimer.

It catalyses the reaction deamido-NAD(+) + NH4(+) + ATP = AMP + diphosphate + NAD(+) + H(+). Its pathway is cofactor biosynthesis; NAD(+) biosynthesis; NAD(+) from deamido-NAD(+) (ammonia route): step 1/1. Catalyzes the ATP-dependent amidation of deamido-NAD to form NAD. Uses ammonia as a nitrogen source. The sequence is that of NH(3)-dependent NAD(+) synthetase from Escherichia coli O8 (strain IAI1).